Here is a 484-residue protein sequence, read N- to C-terminus: AMP nucleosidase (484 aa).

It belongs to the AMP nucleosidase family.

The catalysed reaction is AMP + H2O = adenine + D-ribose 5-phosphate. Functionally, catalyzes the hydrolysis of the N-glycosidic bond of AMP to form adenine and ribose 5-phosphate. Involved in regulation of AMP concentrations. This Escherichia coli O157:H7 protein is AMP nucleosidase.